A 360-amino-acid polypeptide reads, in one-letter code: Carbamoyl phosphate synthase small chain (360 aa).

Residues 1–169 form a CPSase region; sequence MTKRLLILED…TKTAYPAPGI (169 aa). Residues Ser-46, Gly-220, and Gly-222 each contribute to the L-glutamine site. A Glutamine amidotransferase type-1 domain is found at 172-358; the sequence is NIVLVDFGLK…LEMIDSWRCT (187 aa). The active-site Nucleophile is Cys-247. Positions 248, 251, 289, 291, and 292 each coordinate L-glutamine. Residues His-331 and Asp-333 contribute to the active site.

Belongs to the CarA family. As to quaternary structure, composed of two chains; the small (or glutamine) chain promotes the hydrolysis of glutamine to ammonia, which is used by the large (or ammonia) chain to synthesize carbamoyl phosphate. Tetramer of heterodimers (alpha,beta)4.

The enzyme catalyses hydrogencarbonate + L-glutamine + 2 ATP + H2O = carbamoyl phosphate + L-glutamate + 2 ADP + phosphate + 2 H(+). The catalysed reaction is L-glutamine + H2O = L-glutamate + NH4(+). Its pathway is amino-acid biosynthesis; L-arginine biosynthesis; carbamoyl phosphate from bicarbonate: step 1/1. It functions in the pathway pyrimidine metabolism; UMP biosynthesis via de novo pathway; (S)-dihydroorotate from bicarbonate: step 1/3. In terms of biological role, small subunit of the glutamine-dependent carbamoyl phosphate synthetase (CPSase). CPSase catalyzes the formation of carbamoyl phosphate from the ammonia moiety of glutamine, carbonate, and phosphate donated by ATP, constituting the first step of 2 biosynthetic pathways, one leading to arginine and/or urea and the other to pyrimidine nucleotides. The small subunit (glutamine amidotransferase) binds and cleaves glutamine to supply the large subunit with the substrate ammonia. This chain is Carbamoyl phosphate synthase small chain, found in Streptococcus pyogenes serotype M3 (strain SSI-1).